A 504-amino-acid polypeptide reads, in one-letter code: Acid phosphatase A (504 aa).

The signal sequence occupies residues 1-22; that stretch reads MYTLLDILKGLPLLAVAAIASA. 7 N-linked (GlcNAc...) asparagine glycosylation sites follow: Asn84, Asn112, Asn168, Asn260, Asn415, Asn450, and Asn474.

The protein belongs to the metallophosphoesterase superfamily. Purple acid phosphatase family. Monomer.

It localises to the secreted. It carries out the reaction a phosphate monoester + H2O = an alcohol + phosphate. Its function is as follows. Acid phosphatase involved in the regulation of fungal phenotypic traits and virulence in C.parasitica. This is Acid phosphatase A from Cryphonectria parasitica (strain ATCC 38755 / EP155).